A 464-amino-acid polypeptide reads, in one-letter code: Potassium/proton antiporter CemA (464 aa).

Helical transmembrane passes span Phe-36–Leu-56, Ala-241–Ile-261, Leu-341–Phe-361, Ile-389–Val-409, and Thr-425–Phe-445.

Belongs to the CemA family.

It is found in the plastid. Its subcellular location is the chloroplast inner membrane. The enzyme catalyses K(+)(in) + H(+)(out) = K(+)(out) + H(+)(in). Functionally, contributes to K(+)/H(+) antiport activity by supporting proton efflux to control proton extrusion and homeostasis in chloroplasts in a light-dependent manner to modulate photosynthesis. Prevents excessive induction of non-photochemical quenching (NPQ) under continuous-light conditions. Indirectly promotes efficient inorganic carbon uptake into chloroplasts. The polypeptide is Potassium/proton antiporter CemA (Adiantum capillus-veneris (Maidenhair fern)).